The chain runs to 391 residues: Coiled-coil domain-containing protein 85C (391 aa).

Coiled coils occupy residues 19–86 (EELL…RELC) and 116–146 (KEVG…KEII). 2 disordered regions span residues 155–238 (GAGS…LNDS) and 278–303 (PYHS…TRVT). Positions 157–175 (GSRSSIDSQNSLTNLNGSS) are enriched in polar residues. A compositionally biased stretch (low complexity) spans 182–194 (DGSSTSSTGSAGS). Positions 280–303 (HSESQLSPLPQYQEPLQNGSTRVT) are enriched in polar residues.

It belongs to the CCDC85 family.

It is found in the cell junction. The protein resides in the tight junction. It localises to the adherens junction. In terms of biological role, may play a role in cell-cell adhesion and epithelium development through its interaction with proteins of the beta-catenin family. May play an important role in cortical development, especially in the maintenance of radial glia. This chain is Coiled-coil domain-containing protein 85C (ccdc85c), found in Xenopus tropicalis (Western clawed frog).